The following is a 332-amino-acid chain: CXADR-like membrane protein (332 aa).

Residues 1–19 (MHTLIRSFLGLWYVLGALA) form the signal peptide. Ig-like C2-type domains lie at 20-123 (QTEI…SFIT) and 130-220 (PSEL…VDVT). Topologically, residues 20-231 (QTEIKLVADE…QSVSNTGILA (212 aa)) are extracellular. 2 cysteine pairs are disulfide-bonded: Cys35–Cys109 and Cys151–Cys204. N-linked (GlcNAc...) asparagine glycosylation occurs at Asn193. Residues 232–252 (GVACGVVVGVFLIFFTVWLLF) traverse the membrane as a helical segment. The Cytoplasmic portion of the chain corresponds to 253-332 (HKKEFKKREE…EQRHHCLEKI (80 aa)). The tract at residues 276-332 (PKARLVKPGSSSSDSRSSQSGSSSTRSTTNSASRSQRTHSTQETPHGEQRHHCLEKI) is disordered. Residues 285 to 310 (SSSSDSRSSQSGSSSTRSTTNSASRS) show a composition bias toward low complexity. The span at 320–332 (PHGEQRHHCLEKI) shows a compositional bias: basic and acidic residues.

The protein localises to the cell junction. The protein resides in the tight junction. It is found in the cell membrane. This is CXADR-like membrane protein (clmp) from Xenopus tropicalis (Western clawed frog).